The following is a 296-amino-acid chain: LysM and putative peptidoglycan-binding domain-containing protein 4 (296 aa).

Over 1 to 217 (MRHEELLTKT…PMDGADCGIQ (217 aa)) the chain is Extracellular. Positions 29 to 67 (KNGSGDSGDSSEEESHRVVLRPRGKERHKSGVHQPPQAG) are disordered. A glycan (N-linked (GlcNAc...) asparagine) is linked at Asn30. Basic residues predominate over residues 46–59 (VVLRPRGKERHKSG). The 45-residue stretch at 74-118 (LQRELAQEDSLNKLALQYGCKVADIKKVNNFIREQDLYALKSVKI) folds into the LysM domain. Residues 218 to 238 (WWNAVFIMLLIGIVLPVFYLV) traverse the membrane as a helical segment. At 239–296 (YFKIQASGETPNSLNTTVIPNGSMAMGTVPGQAPRLAVAVPAVTSADSQFSQTTQAGS) the chain is on the cytoplasmic side.

Its subcellular location is the membrane. This Homo sapiens (Human) protein is LysM and putative peptidoglycan-binding domain-containing protein 4 (LYSMD4).